The chain runs to 688 residues: DNA ligase (688 aa).

NAD(+) is bound by residues 51-55 (DSEYD), 100-101 (SL), and Glu-129. Lys-131 functions as the N6-AMP-lysine intermediate in the catalytic mechanism. NAD(+) is bound by residues Arg-152, Glu-189, Lys-308, and Lys-332. Cys-426, Cys-429, Cys-444, and Cys-450 together coordinate Zn(2+). Positions 609-688 (ADEQPLKGQT…DELLALLANS (80 aa)) constitute a BRCT domain.

This sequence belongs to the NAD-dependent DNA ligase family. LigA subfamily. Mg(2+) is required as a cofactor. The cofactor is Mn(2+).

The enzyme catalyses NAD(+) + (deoxyribonucleotide)n-3'-hydroxyl + 5'-phospho-(deoxyribonucleotide)m = (deoxyribonucleotide)n+m + AMP + beta-nicotinamide D-nucleotide.. In terms of biological role, DNA ligase that catalyzes the formation of phosphodiester linkages between 5'-phosphoryl and 3'-hydroxyl groups in double-stranded DNA using NAD as a coenzyme and as the energy source for the reaction. It is essential for DNA replication and repair of damaged DNA. The protein is DNA ligase of Shewanella sp. (strain MR-4).